A 347-amino-acid chain; its full sequence is D-alanine--D-alanine ligase (347 aa).

The ATP-grasp domain maps to 133-342 (KQAFAQASLP…FPDLVHRLIQ (210 aa)). 169 to 224 (ETELGYPCFVKPANLGSSVGIAKVRDRAELEAALDQAAALDRRLIIEAAIDNPREV) is a binding site for ATP. The Mg(2+) site is built by Asp-296, Glu-309, and Asn-311.

The protein belongs to the D-alanine--D-alanine ligase family. Requires Mg(2+) as cofactor. It depends on Mn(2+) as a cofactor.

The protein localises to the cytoplasm. It carries out the reaction 2 D-alanine + ATP = D-alanyl-D-alanine + ADP + phosphate + H(+). The protein operates within cell wall biogenesis; peptidoglycan biosynthesis. Its function is as follows. Cell wall formation. This chain is D-alanine--D-alanine ligase, found in Synechococcus elongatus (strain ATCC 33912 / PCC 7942 / FACHB-805) (Anacystis nidulans R2).